We begin with the raw amino-acid sequence, 201 residues long: 3-isopropylmalate dehydratase small subunit (201 aa).

The protein belongs to the LeuD family. LeuD type 1 subfamily. In terms of assembly, heterodimer of LeuC and LeuD.

It catalyses the reaction (2R,3S)-3-isopropylmalate = (2S)-2-isopropylmalate. It functions in the pathway amino-acid biosynthesis; L-leucine biosynthesis; L-leucine from 3-methyl-2-oxobutanoate: step 2/4. Catalyzes the isomerization between 2-isopropylmalate and 3-isopropylmalate, via the formation of 2-isopropylmaleate. The protein is 3-isopropylmalate dehydratase small subunit of Ruegeria pomeroyi (strain ATCC 700808 / DSM 15171 / DSS-3) (Silicibacter pomeroyi).